The following is a 339-amino-acid chain: Bifunctional phosphoglucose/phosphomannose isomerase (339 aa).

Residues 22–164 enclose the SIS domain; that stretch reads ISVNVKAEDI…IEPVDDQIEE (143 aa). Residues G41, S42, S83, S85, T88, and R135 each contribute to the D-fructose 6-phosphate site. The Proton acceptor role is filled by E221. D-fructose 6-phosphate is bound by residues H237 and K331. H237 functions as the Proton donor in the catalytic mechanism. The active-site Proton acceptor is the K331.

This sequence belongs to the PGI/PMI family. Homodimer.

It catalyses the reaction alpha-D-glucose 6-phosphate = beta-D-fructose 6-phosphate. The enzyme catalyses D-mannose 6-phosphate = D-fructose 6-phosphate. Dual specificity isomerase that catalyzes the isomerization of both glucose-6-phosphate and mannose-6-phosphate to fructose-6-phosphate. The chain is Bifunctional phosphoglucose/phosphomannose isomerase from Caldicellulosiruptor bescii (strain ATCC BAA-1888 / DSM 6725 / KCTC 15123 / Z-1320) (Anaerocellum thermophilum).